Consider the following 304-residue polypeptide: Secreted mono- and diacylglycerol lipase LIP1 (304 aa).

A signal peptide spans 1-19; the sequence is MLFSRFVLLAFGSVAAVSA. O-linked (Man...) threonine glycosylation occurs at Thr-32. Cysteines 57 and 297 form a disulfide. The Nucleophile role is filled by Ser-171. Asp-228 is an active-site residue. The N-linked (GlcNAc...) asparagine glycan is linked to Asn-253. His-281 is a catalytic residue.

It belongs to the AB hydrolase superfamily. Lipase family. Class 3 subfamily.

The protein resides in the secreted. It is found in the cell wall. The enzyme catalyses a monoacylglycerol + H2O = glycerol + a fatty acid + H(+). It catalyses the reaction a diacylglycerol + H2O = a monoacylglycerol + a fatty acid + H(+). RHC 80267, a well-known inhibitor of diacylglycerol lipases from mammals, also acts as an inhibitor for LIP1/SMG1. In terms of biological role, secreted lipase involved in Dandruff and seborrheic dermatitis (D/SD) probably via lipase-mediated breakdown of sebaceous lipids and release of irritating free fatty acids. Shows activity against monoglyceride and diglyceride substrates, but not triglyceride substrates and does not exhibit regio-selective production of diacylglycerols. Able to hydrolyze diacylglycerols such as distearin, dilinolein, dipalmitoylglycerol and dipalmitolein. Cleaves oleic acid from 1,2 isomers of diolein on both the 1 and the 2 position of the glycerol backbone, resulting mainly in free fatty acids but no monoolein is detected. Shows activity on monoolein and liberates mostly free fatty acids, but can also perform the reverse reaction and produce diolein. The protein is Secreted mono- and diacylglycerol lipase LIP1 of Malassezia globosa (strain ATCC MYA-4612 / CBS 7966) (Dandruff-associated fungus).